Consider the following 1009-residue polypeptide: Type VII secretion system accessory factor EsaA (1009 aa).

A helical membrane pass occupies residues 7 to 27 (IYALIVTLIIIIAIVSMIFFV). A compositionally biased stretch (basic and acidic residues) spans 680 to 697 (TFAEEPQEPKIDKGKNDE). The disordered stretch occupies residues 680–707 (TFAEEPQEPKIDKGKNDEFNTMSSNLDK). The next 5 helical transmembrane spans lie at 822-842 (ISPTLFVLLMYLLSMITAYIF), 869-889 (VITSGVIGTTGLVEGLIVGLI), 903-923 (KFILMVILTMMVFVLINTYLL), 928-948 (SIGMFLMIAALGLYFVAMNNL), and 979-999 (IGLVLVILTVLVIIGFVLNMF).

The protein belongs to the EsaA family. As to quaternary structure, homodimer. Interacts with EssB.

It localises to the cell membrane. In terms of biological role, component of the type VII secretion system (Ess). Provides together with EssB and other components such as EssC and EssE a secretion platform across the cytoplasmic membrane in the host. This chain is Type VII secretion system accessory factor EsaA, found in Staphylococcus aureus (strain COL).